Here is a 443-residue protein sequence, read N- to C-terminus: UDP-N-acetylmuramate--L-alanine ligase (443 aa).

110-116 (GAHGKTS) serves as a coordination point for ATP.

Belongs to the MurCDEF family.

It is found in the cytoplasm. The enzyme catalyses UDP-N-acetyl-alpha-D-muramate + L-alanine + ATP = UDP-N-acetyl-alpha-D-muramoyl-L-alanine + ADP + phosphate + H(+). It participates in cell wall biogenesis; peptidoglycan biosynthesis. Functionally, cell wall formation. The sequence is that of UDP-N-acetylmuramate--L-alanine ligase from Streptococcus agalactiae serotype III (strain NEM316).